Here is a 97-residue protein sequence, read N- to C-terminus: Secreted transmembrane peptide 4 (97 aa).

The first 33 residues, 1–33 (MTKNMTKKKMGLMSPNIAAFVLPMLLVLFTISS), serve as a signal peptide directing secretion. The short motif at 54-67 (IVFTPPSSSCGGSP) is the SCOOP motif element. A SxS motif essential for MIK2 binding motif is present at residues 60–62 (SSS). The interval 75–97 (WMPRRPCRRTRPPGTNIPVSQSP) is disordered.

This sequence belongs to the serine rich endogenous peptide (SCOOP) phytocytokine family. As to quaternary structure, interacts with MIK2 (via extracellular leucine-rich repeat domain); this interaction triggers the formation of complex between MIK2 and the BAK1/SERK3 and SERK4 coreceptors, and subsequent BAK1 activation by phosphorylation. Mostly expressed in leaves and stems, and, to a lower extent, in roots, siliques, seeds and flowers.

It is found in the cell membrane. The protein localises to the secreted. The protein resides in the extracellular space. Its subcellular location is the apoplast. Brassicaceae-specific phytocytokine (plant endogenous peptide released into the apoplast) perceived by MIK2 in a BAK1/SERK3 and SERK4 coreceptors-dependent manner, that modulates various physiological and antimicrobial processes including growth prevention and reactive oxygen species (ROS) response regulation. Prevents general growth and development. This Arabidopsis thaliana (Mouse-ear cress) protein is Secreted transmembrane peptide 4.